The chain runs to 461 residues: MVTLSSNSIFATNRDQESSGFAWWAGNARLINLSGKLLGAHVAHAGLIVFWAGAMTLFELAHFIPEKPMYEQGLILIPHIATLGWGVGPGGEVVDTFPFFVVGVVHLISSAVLGFGGVYHAIRGPETLEEYSSFFGYDWKDKNKMTTILGFHLIVLGIGALLLVAKAMFFGGLYDTWAPGGGDVRVITNPTLDPRVIFGYLLKSPFGGEGWIVSVNNLEDVVGGHIWIGLICIAGGIWHILTTPFGWARRAFIWSGEAYLSYSLGALSMMGFIATCFVWFNNTVYPSEFYGPTGPEASQAQAMTFLIRDQKLGANVGSAQGPTGLGKYLMRSPTGEIIFGGETMRFWDFRGPWLEPLRGPNGLDLNKIKNDIQPWQERRAAEYMTHAPLGSLNSVGGVATEINSVNFVSPRSWLATSHFVLAFFFLVGHLWHAGRARAAAAGFEKGIDRESEPVLSMPSLD.

At 1-48 the chain is on the cytoplasmic side; sequence MVTLSSNSIFATNRDQESSGFAWWAGNARLINLSGKLLGAHVAHAGLI. A helical membrane pass occupies residues 49 to 71; it reads VFWAGAMTLFELAHFIPEKPMYE. Topologically, residues 72–111 are lumenal; that stretch reads QGLILIPHIATLGWGVGPGGEVVDTFPFFVVGVVHLISSA. Residues 112–133 form a helical membrane-spanning segment; sequence VLGFGGVYHAIRGPETLEEYSS. Residues 134–155 are Cytoplasmic-facing; the sequence is FFGYDWKDKNKMTTILGFHLIV. The chain crosses the membrane as a helical span at residues 156–178; that stretch reads LGIGALLLVAKAMFFGGLYDTWA. Residues 179-232 lie on the Lumenal side of the membrane; sequence PGGGDVRVITNPTLDPRVIFGYLLKSPFGGEGWIVSVNNLEDVVGGHIWIGLIC. Residues 233 to 253 traverse the membrane as a helical segment; the sequence is IAGGIWHILTTPFGWARRAFI. At 254–268 the chain is on the cytoplasmic side; that stretch reads WSGEAYLSYSLGALS. Residues 269 to 289 traverse the membrane as a helical segment; the sequence is MMGFIATCFVWFNNTVYPSEF. Topologically, residues 290–424 are lumenal; the sequence is YGPTGPEASQ…ATSHFVLAFF (135 aa). Glu-355 is a [CaMn4O5] cluster binding site. Residues 425 to 449 traverse the membrane as a helical segment; the sequence is FLVGHLWHAGRARAAAAGFEKGIDR. Residues 450–461 lie on the Cytoplasmic side of the membrane; it reads ESEPVLSMPSLD.

As to quaternary structure, PSII is composed of 1 copy each of membrane proteins PsbA, PsbB, PsbC, PsbD, PsbE, PsbF, PsbH, PsbI, PsbJ, PsbK, PsbL, PsbM, PsbT, PsbX, PsbY, PsbZ, Psb30/Ycf12, peripheral proteins PsbO, CyanoQ (PsbQ), PsbU, PsbV and a large number of cofactors. It forms dimeric complexes. Part of a photosystem II (PSII) assembly intermediate complex PSII-I; crystallized from a strain deleted of psbJ, it forms monomeric PSII before addition of the oxygen evolving complex. PSII-I includes 3 assembly factors not found in mature PSII (Psb27, Psb28 and Psb34), and CP43 (this protein) is not in its mature conformation. The cofactor is Binds multiple chlorophylls and provides some of the ligands for the Ca-4Mn-5O cluster of the oxygen-evolving complex. It may also provide a ligand for a Cl- that is required for oxygen evolution. PSII binds additional chlorophylls, carotenoids and specific lipids..

It localises to the cellular thylakoid membrane. One of the components of the core complex of photosystem II (PSII). It binds chlorophyll and helps catalyze the primary light-induced photochemical processes of PSII. PSII is a light-driven water:plastoquinone oxidoreductase, using light energy to abstract electrons from H(2)O, generating O(2) and a proton gradient subsequently used for ATP formation. In Thermosynechococcus vestitus (strain NIES-2133 / IAM M-273 / BP-1), this protein is Photosystem II CP43 reaction center protein.